A 23-amino-acid polypeptide reads, in one-letter code: Potassium channel toxin alpha-KTx 13.1 (23 aa).

3 disulfides stabilise this stretch: Cys2/Cys15, Cys5/Cys20, and Cys9/Cys22. Residues 13–20 (GKCINGRC) are interaction with Ca(2+)-activated K(+) channels.

As to expression, expressed by the venom gland.

Its subcellular location is the secreted. In terms of biological role, blocks reversibly Shaker B potassium channels. Also displaces binding of noxiustoxin to mouse brain synaptosome membranes. This is Potassium channel toxin alpha-KTx 13.1 from Tityus obscurus (Amazonian scorpion).